The following is a 170-amino-acid chain: Adenine phosphoribosyltransferase (170 aa).

It belongs to the purine/pyrimidine phosphoribosyltransferase family. Homodimer.

The protein resides in the cytoplasm. The catalysed reaction is AMP + diphosphate = 5-phospho-alpha-D-ribose 1-diphosphate + adenine. It functions in the pathway purine metabolism; AMP biosynthesis via salvage pathway; AMP from adenine: step 1/1. Catalyzes a salvage reaction resulting in the formation of AMP, that is energically less costly than de novo synthesis. The polypeptide is Adenine phosphoribosyltransferase (Mycoplasma capricolum subsp. capricolum (strain California kid / ATCC 27343 / NCTC 10154)).